Here is a 310-residue protein sequence, read N- to C-terminus: MNLYDLLELPTTASIKEIKIAYKRLAKRYHPDVNKLGSQTFVEINNAYSILSDPNQKEKYDSMLKVNDFQNRIKNLDISVRWHENFMEELELRKNWEFDFFSSDEDFFYSPFTKNKYASFLDKDVSLAFFQLYSKGKIDHQLEKSLLKRRDVKEACQQNKNFIEVIKEQYNYFGWIEAKRYFNINVELELTQREIRDRDVVNLPLKIKVINNDFPNQLWYEIYKNYSFRLSWDIKNGEIAEFFNKGNRALGWKGDLIVRMKVVNKVNKRLRIFSSFFENDKSKLWFLVPNDKQSNPNKGVFNYKTQHFID.

Residues 1-66 enclose the J domain; it reads MNLYDLLELP…KEKYDSMLKV (66 aa).

The polypeptide is DnaJ-like protein MG002 (Mycoplasma genitalium (strain ATCC 33530 / DSM 19775 / NCTC 10195 / G37) (Mycoplasmoides genitalium)).